The sequence spans 319 residues: Annexin A4 (319 aa).

Ala-2 bears the N-acetylalanine mark. A Phosphothreonine; by PKC modification is found at Thr-7. Position 12 is a phosphoserine (Ser-12). Annexin repeat units lie at residues 14-85 (FNAA…GMMT), 86-157 (PTVL…SLSA), 169-241 (ALVR…AIVK), and 245-316 (NKSA…ILCG). N6-acetyllysine occurs at positions 213, 293, and 300.

It belongs to the annexin family. In terms of assembly, monomer.

The protein resides in the zymogen granule membrane. Its function is as follows. Calcium/phospholipid-binding protein which promotes membrane fusion and is involved in exocytosis. The protein is Annexin A4 (ANXA4) of Sus scrofa (Pig).